The chain runs to 375 residues: Histidine biosynthesis bifunctional protein HisB (375 aa).

The histidinol-phosphatase stretch occupies residues 1–168 (MTPILFVDRD…GIAHELADAP (168 aa)). The active-site Nucleophile is the aspartate 8. Mg(2+)-binding residues include aspartate 8, aspartate 10, and aspartate 128. Aspartate 10 serves as the catalytic Proton donor. Residues 169 to 375 (RRAVVQRNTK…TALPTTKGAL (207 aa)) are imidazoleglycerol-phosphate dehydratase.

This sequence in the N-terminal section; belongs to the histidinol-phosphatase family. The protein in the C-terminal section; belongs to the imidazoleglycerol-phosphate dehydratase family. Requires Mg(2+) as cofactor.

The protein localises to the cytoplasm. It carries out the reaction D-erythro-1-(imidazol-4-yl)glycerol 3-phosphate = 3-(imidazol-4-yl)-2-oxopropyl phosphate + H2O. The catalysed reaction is L-histidinol phosphate + H2O = L-histidinol + phosphate. It participates in amino-acid biosynthesis; L-histidine biosynthesis; L-histidine from 5-phospho-alpha-D-ribose 1-diphosphate: step 6/9. Its pathway is amino-acid biosynthesis; L-histidine biosynthesis; L-histidine from 5-phospho-alpha-D-ribose 1-diphosphate: step 8/9. The protein is Histidine biosynthesis bifunctional protein HisB of Xanthomonas euvesicatoria pv. vesicatoria (strain 85-10) (Xanthomonas campestris pv. vesicatoria).